The sequence spans 271 residues: 2,3,4,5-tetrahydropyridine-2,6-dicarboxylate N-succinyltransferase (271 aa).

It belongs to the transferase hexapeptide repeat family.

The protein localises to the cytoplasm. It catalyses the reaction (S)-2,3,4,5-tetrahydrodipicolinate + succinyl-CoA + H2O = (S)-2-succinylamino-6-oxoheptanedioate + CoA. It functions in the pathway amino-acid biosynthesis; L-lysine biosynthesis via DAP pathway; LL-2,6-diaminopimelate from (S)-tetrahydrodipicolinate (succinylase route): step 1/3. This is 2,3,4,5-tetrahydropyridine-2,6-dicarboxylate N-succinyltransferase from Coxiella burnetii (strain CbuG_Q212) (Coxiella burnetii (strain Q212)).